The chain runs to 296 residues: GTPase Era (296 aa).

In terms of domain architecture, Era-type G spans 2–171 (KAGFIAVVGR…LEALDPYLED (170 aa)). The tract at residues 10–17 (GRPNVGKS) is G1. 10–17 (GRPNVGKS) is a GTP binding site. The interval 36–40 (GTTRD) is G2. Positions 57–60 (DTPG) are G3. Residues 57 to 61 (DTPGI) and 120 to 123 (NKVD) each bind GTP. A G4 region spans residues 120-123 (NKVD). The tract at residues 150–152 (ASG) is G5. Positions 202–279 (TRDEIPHSVA…YLGLWVKVKD (78 aa)) constitute a KH type-2 domain.

Belongs to the TRAFAC class TrmE-Era-EngA-EngB-Septin-like GTPase superfamily. Era GTPase family. Monomer.

It is found in the cytoplasm. The protein resides in the cell inner membrane. In terms of biological role, an essential GTPase that binds both GDP and GTP, with rapid nucleotide exchange. Plays a role in 16S rRNA processing and 30S ribosomal subunit biogenesis and possibly also in cell cycle regulation and energy metabolism. The polypeptide is GTPase Era (Fusobacterium nucleatum subsp. nucleatum (strain ATCC 25586 / DSM 15643 / BCRC 10681 / CIP 101130 / JCM 8532 / KCTC 2640 / LMG 13131 / VPI 4355)).